Here is a 350-residue protein sequence, read N- to C-terminus: Phenylalanine--tRNA ligase alpha subunit (350 aa).

Mg(2+) is bound at residue glutamate 259.

This sequence belongs to the class-II aminoacyl-tRNA synthetase family. Phe-tRNA synthetase alpha subunit type 1 subfamily. As to quaternary structure, tetramer of two alpha and two beta subunits. Requires Mg(2+) as cofactor.

It localises to the cytoplasm. It catalyses the reaction tRNA(Phe) + L-phenylalanine + ATP = L-phenylalanyl-tRNA(Phe) + AMP + diphosphate + H(+). This Rickettsia prowazekii (strain Madrid E) protein is Phenylalanine--tRNA ligase alpha subunit (pheS).